The chain runs to 91 residues: uncharacterized protein (91 aa).

2 helical membrane passes run 10–30 (VLFT…AGGI) and 46–66 (LLVA…QALS). Residues 68–91 (MRRQDGARGTARAGRNSARRRMPS) are disordered.

The protein localises to the cell membrane. This is an uncharacterized protein from Sinorhizobium fredii (strain NBRC 101917 / NGR234).